Here is a 778-residue protein sequence, read N- to C-terminus: Putative ATP-dependent RNA helicase MJ1505 (778 aa).

Residues isoleucine 22–histidine 186 form the Helicase ATP-binding domain. Residue leucine 35 to threonine 42 coordinates ATP. The short motif at aspartate 137–histidine 140 is the DEAH box element. Residues lysine 338–lysine 516 enclose the Helicase C-terminal domain.

Belongs to the DEAD box helicase family. DEAH subfamily.

The catalysed reaction is ATP + H2O = ADP + phosphate + H(+). In Methanocaldococcus jannaschii (strain ATCC 43067 / DSM 2661 / JAL-1 / JCM 10045 / NBRC 100440) (Methanococcus jannaschii), this protein is Putative ATP-dependent RNA helicase MJ1505.